The following is a 227-amino-acid chain: MICOS complex subunit MIC19 (227 aa).

A lipid anchor (N-myristoyl glycine) is attached at glycine 2. The residue at position 29 (serine 29) is a Phosphoserine. Disordered regions lie at residues 34 to 61 (DRMK…SDEE) and 73 to 92 (EQAK…KELD). Positions 39–49 (SSPSGSKSQRY) are enriched in polar residues. Phosphotyrosine is present on tyrosine 49. Serine 50, serine 56, and serine 58 each carry phosphoserine. Lysine 142 carries the post-translational modification N6-acetyllysine. The CHCH domain maps to 180–222 (HPVCADLQAKILQCYRENTHQTLKCSALATQYMHCVNHAKQSM). Short sequence motifs (cx9C motif) lie at residues 183-193 (CADLQAKILQC) and 204-214 (CSALATQYMHC). Intrachain disulfides connect cysteine 183-cysteine 214 and cysteine 193-cysteine 204.

This sequence belongs to the MICOS complex subunit Mic19 family. Metazoan Mic19 subfamily. Component of the mitochondrial contact site and cristae organizing system (MICOS) complex, composed of at least MICOS10/MIC10, CHCHD3/MIC19, CHCHD6/MIC25, APOOL/MIC27, IMMT/MIC60, APOO/MIC23/MIC26 and MICOS13/MIC13. This complex was also known under the names MINOS or MitOS complex. The MICOS complex associates with mitochondrial outer membrane proteins SAMM50, MTX1 and MTX2 (together described as components of the mitochondrial outer membrane sorting assembly machinery (SAM) complex) and DNAJC11, mitochondrial inner membrane protein TMEM11 and with HSPA9. The MICOS and SAM complexes together with DNAJC11 are part of a large protein complex spanning both membranes termed the mitochondrial intermembrane space bridging (MIB) complex. Interacts with HSPA1A/HSPA1B and OPA1, preferentially with the soluble OPA1 form. Interacts with IMMT/MIC60. In terms of assembly, (Microbial infection) Interacts with human cytomegalovirus protein UL13; this interaction alters cristae architecture. Detected at low levels in brain, placenta, lung, liver, kidney and pancreas with increased levels in heart and skeletal muscle. Higher expression in primary lung cancers than in normal lung tissue.

It localises to the mitochondrion inner membrane. It is found in the cytoplasm. Its subcellular location is the nucleus. The protein resides in the mitochondrion. Functionally, component of the MICOS complex, a large protein complex of the mitochondrial inner membrane that plays crucial roles in the maintenance of crista junctions, inner membrane architecture, and formation of contact sites to the outer membrane. Plays an important role in the maintenance of the MICOS complex stability and the mitochondrial cristae morphology. Has also been shown to function as a transcription factor which binds to the BAG1 promoter and represses BAG1 transcription. This Homo sapiens (Human) protein is MICOS complex subunit MIC19 (CHCHD3).